The following is a 60-amino-acid chain: uncharacterized protein (60 aa).

The chain crosses the membrane as a helical span at residues Leu-19–Tyr-39.

The protein localises to the membrane. This is an uncharacterized protein from Saccharomyces cerevisiae (strain ATCC 204508 / S288c) (Baker's yeast).